Consider the following 1157-residue polypeptide: uncharacterized protein (1157 aa).

The span at 1–10 shows a compositional bias: basic and acidic residues; that stretch reads MDPHWKRHDS. 3 disordered regions span residues 1 to 35, 159 to 233, and 478 to 498; these read MDPH…QRFG, QTTP…SVEP, and KNQS…GKGP. 2 stretches are compositionally biased toward low complexity: residues 18–31 and 181–197; these read SPSA…PSSA and SAGT…NPNF. The span at 208–228 shows a compositional bias: polar residues; the sequence is QEWQQSPLESPLSMHSLQESL. Positions 501-574 constitute a CSD2 domain; that stretch reads VWFKPSDKRI…KVEYKAILHD (74 aa). In terms of domain architecture, RNB spans 608-921; the sequence is LRDKLTFMIG…ICVQRQLREA (314 aa). A DIS3L2 C-terminal domain is found at 973-1030; sequence GLVKHKAFVLAVDQEYIDIVIYEFGLERRISLDLLPLSNCDFNEQKHELYLSWRTNAS. Positions 1084 to 1113 are disordered; that stretch reads YSKARGNDSTSKTAKSSSGNQDISGDGKLH. Polar residues predominate over residues 1090-1106; that stretch reads NDSTSKTAKSSSGNQDI.

It belongs to the RNR ribonuclease family.

It localises to the cytoplasm. This is an uncharacterized protein from Schizosaccharomyces pombe (strain 972 / ATCC 24843) (Fission yeast).